The sequence spans 210 residues: ATP-dependent Clp protease proteolytic subunit (210 aa).

Ser-107 serves as the catalytic Nucleophile. His-132 is an active-site residue.

Belongs to the peptidase S14 family. In terms of assembly, fourteen ClpP subunits assemble into 2 heptameric rings which stack back to back to give a disk-like structure with a central cavity, resembling the structure of eukaryotic proteasomes.

The protein resides in the cytoplasm. It catalyses the reaction Hydrolysis of proteins to small peptides in the presence of ATP and magnesium. alpha-casein is the usual test substrate. In the absence of ATP, only oligopeptides shorter than five residues are hydrolyzed (such as succinyl-Leu-Tyr-|-NHMec, and Leu-Tyr-Leu-|-Tyr-Trp, in which cleavage of the -Tyr-|-Leu- and -Tyr-|-Trp bonds also occurs).. In terms of biological role, cleaves peptides in various proteins in a process that requires ATP hydrolysis. Has a chymotrypsin-like activity. Plays a major role in the degradation of misfolded proteins. The polypeptide is ATP-dependent Clp protease proteolytic subunit (Zymomonas mobilis subsp. mobilis (strain ATCC 31821 / ZM4 / CP4)).